The sequence spans 492 residues: N-succinylglutamate 5-semialdehyde dehydrogenase (492 aa).

Residue 220–225 coordinates NAD(+); sequence GSANTG. Active-site residues include Glu-243 and Cys-277.

It belongs to the aldehyde dehydrogenase family. AstD subfamily.

It carries out the reaction N-succinyl-L-glutamate 5-semialdehyde + NAD(+) + H2O = N-succinyl-L-glutamate + NADH + 2 H(+). It participates in amino-acid degradation; L-arginine degradation via AST pathway; L-glutamate and succinate from L-arginine: step 4/5. Its function is as follows. Catalyzes the NAD-dependent reduction of succinylglutamate semialdehyde into succinylglutamate. In Escherichia coli (strain 55989 / EAEC), this protein is N-succinylglutamate 5-semialdehyde dehydrogenase.